Reading from the N-terminus, the 396-residue chain is Elongation factor Tu (396 aa).

The tr-type G domain maps to 11–205; that stretch reads KPHVNIGTIG…TVDEYIPTPE (195 aa). A G1 region spans residues 20-27; sequence GHVDHGKT. 20–27 is a GTP binding site; the sequence is GHVDHGKT. Thr27 provides a ligand contact to Mg(2+). Residues 61–65 form a G2 region; it reads GITIN. Positions 82 to 85 are G3; the sequence is DAPG. GTP contacts are provided by residues 82 to 86 and 137 to 140; these read DAPGH and NKVD. Residues 137 to 140 form a G4 region; sequence NKVD. The interval 175 to 177 is G5; sequence SAL.

This sequence belongs to the TRAFAC class translation factor GTPase superfamily. Classic translation factor GTPase family. EF-Tu/EF-1A subfamily. In terms of assembly, monomer.

The protein resides in the cytoplasm. It carries out the reaction GTP + H2O = GDP + phosphate + H(+). Its function is as follows. GTP hydrolase that promotes the GTP-dependent binding of aminoacyl-tRNA to the A-site of ribosomes during protein biosynthesis. In Lactobacillus gasseri (strain ATCC 33323 / DSM 20243 / BCRC 14619 / CIP 102991 / JCM 1131 / KCTC 3163 / NCIMB 11718 / NCTC 13722 / AM63), this protein is Elongation factor Tu.